The following is a 377-amino-acid chain: Alanine dehydrogenase (377 aa).

Substrate-binding residues include arginine 15 and lysine 74. The active-site Proton donor/acceptor is the histidine 95. NAD(+) contacts are provided by residues serine 133, aspartate 197, arginine 202, serine 219, valine 238–leucine 239, valine 266–aspartate 269, and valine 304–methionine 307. Aspartate 269 functions as the Proton donor/acceptor in the catalytic mechanism.

The protein belongs to the AlaDH/PNT family. As to quaternary structure, homohexamer.

The enzyme catalyses L-alanine + NAD(+) + H2O = pyruvate + NH4(+) + NADH + H(+). It functions in the pathway organosulfur degradation; alkanesulfonate degradation. Its function is as follows. Involved in an anaerobic respiration pathway that converts the sulfonate taurine (2-aminoethanesulfonate) to ammonia, acetate and sulfide. Acts as an alanine dehydrogenase that regenerates pyruvate, the amino group acceptor for the taurine--pyruvate aminotransferase enzyme, and liberates ammonia. This is Alanine dehydrogenase from Bilophila wadsworthia (strain 3_1_6).